The primary structure comprises 423 residues: AP-1 complex subunit mu-2 (423 aa).

The region spanning 168 to 421 is the MHD domain; the sequence is KNEVFIDVIE…ITQSGDYQLR (254 aa).

This sequence belongs to the adaptor complexes medium subunit family. In terms of assembly, adaptor protein complex 1 (AP-1) is a heterotetramer composed of two large adaptins (gamma-type subunit AP1G1 and beta-type subunit AP1B1), a medium adaptin (mu-type subunit AP1M1 or AP1M2) and a small adaptin (sigma-type subunit AP1S1 or AP1S2 or AP1S3). Interacts with P2X4. Post-translationally, phosphorylation of membrane-bound AP1M1/AP1M2 increases its affinity for sorting signals.

The protein resides in the golgi apparatus. Its subcellular location is the cytoplasmic vesicle. It is found in the clathrin-coated vesicle membrane. Subunit of clathrin-associated adaptor protein complex 1 that plays a role in protein sorting in the trans-Golgi network (TGN) and endosomes. The AP complexes mediate the recruitment of clathrin to membranes and the recognition of sorting signals within the cytosolic tails of transmembrane cargo molecules. The chain is AP-1 complex subunit mu-2 (Ap1m2) from Mus musculus (Mouse).